Consider the following 86-residue polypeptide: Large ribosomal subunit protein bL31B (86 aa).

This sequence belongs to the bacterial ribosomal protein bL31 family. Type B subfamily. Part of the 50S ribosomal subunit.

This is Large ribosomal subunit protein bL31B from Vibrio vulnificus (strain YJ016).